We begin with the raw amino-acid sequence, 140 residues long: ATP synthase epsilon chain (140 aa).

Belongs to the ATPase epsilon chain family. In terms of assembly, F-type ATPases have 2 components, CF(1) - the catalytic core - and CF(0) - the membrane proton channel. CF(1) has five subunits: alpha(3), beta(3), gamma(1), delta(1), epsilon(1). CF(0) has three main subunits: a, b and c.

The protein resides in the cell inner membrane. Produces ATP from ADP in the presence of a proton gradient across the membrane. The chain is ATP synthase epsilon chain from Vibrio parahaemolyticus serotype O3:K6 (strain RIMD 2210633).